The chain runs to 152 residues: AIG2-like protein D (152 aa).

13–18 (YGSLMA) serves as a coordination point for substrate. Catalysis depends on glutamate 81, which acts as the Proton acceptor.

Belongs to the gamma-glutamylcyclotransferase family. As to expression, expressed mainly in leaves.

Functionally, putative gamma-glutamylcyclotransferase. In Arabidopsis thaliana (Mouse-ear cress), this protein is AIG2-like protein D.